The following is a 396-amino-acid chain: Elongation factor Tu (396 aa).

Residues lysine 10–glutamate 206 enclose the tr-type G domain. The segment at glycine 19–threonine 26 is G1. GTP is bound at residue glycine 19–threonine 26. Residue threonine 26 participates in Mg(2+) binding. Residues glycine 60–asparagine 64 are G2. Residues aspartate 81–glycine 84 form a G3 region. GTP-binding positions include aspartate 81–histidine 85 and asparagine 136–aspartate 139. Residues asparagine 136–aspartate 139 form a G4 region. The interval serine 174–lysine 176 is G5.

This sequence belongs to the TRAFAC class translation factor GTPase superfamily. Classic translation factor GTPase family. EF-Tu/EF-1A subfamily. As to quaternary structure, monomer.

The protein localises to the cytoplasm. The enzyme catalyses GTP + H2O = GDP + phosphate + H(+). GTP hydrolase that promotes the GTP-dependent binding of aminoacyl-tRNA to the A-site of ribosomes during protein biosynthesis. This chain is Elongation factor Tu, found in Cupriavidus pinatubonensis (strain JMP 134 / LMG 1197) (Cupriavidus necator (strain JMP 134)).